Here is a 78-residue protein sequence, read N- to C-terminus: Probable Vpr-like protein (78 aa).

The Nuclear export signal signature appears at 35–43; sequence AIRLLQGLF. Positions 45–54 match the Nuclear localization signal motif; sequence RYRFKKPRVD.

The protein localises to the virion. The protein resides in the host nucleus. In terms of biological role, seems to function as a Vpr-like protein, since it mediates host cell cycle arrest in G2 phase. Cell cycle arrest creates a favorable environment for maximizing viral expression and production. In Feline immunodeficiency virus (isolate Petaluma) (FIV), this protein is Probable Vpr-like protein.